A 336-amino-acid chain; its full sequence is Polyadenylate-binding protein-interacting protein 12 (336 aa).

The segment at 14–47 (EAGGLISPSPPSSVTSQESGASSNNDHGGNGIHD) is disordered. Over residues 25–40 (SSVTSQESGASSNNDH) the composition is skewed to polar residues. The PAM2-like signature appears at 75–85 (KLNPMAKEFIP). Positions 122–134 (RRKKSFGQQGKRR) match the Bipartite nuclear localization signal motif. RRM domains lie at 150–225 (RTVY…PSKT) and 247–323 (RTIY…PSKT).

In terms of assembly, interacts with MPC. Expressed in roots, leaves, stems, flowers and siliques. Detected in flowers only in growing organs: gynoecium, petals, stamenal filaments, anther walls and ovules.

It localises to the nucleus. In terms of biological role, binds nucleotic acids in vitro. The chain is Polyadenylate-binding protein-interacting protein 12 (CID12) from Arabidopsis thaliana (Mouse-ear cress).